We begin with the raw amino-acid sequence, 361 residues long: sn-glycerol-3-phosphate import ATP-binding protein UgpC (361 aa).

An ABC transporter domain is found at 4–235 (LSLKGIRKSY…PETVFVAGFI (232 aa)). An ATP-binding site is contributed by 37-44 (GPSGCGKS).

The protein belongs to the ABC transporter superfamily. sn-glycerol-3-phosphate importer (TC 3.A.1.1.3) family. As to quaternary structure, the complex is composed of two ATP-binding proteins (UgpC), two transmembrane proteins (UgpA and UgpE) and a solute-binding protein (UgpB).

The protein localises to the cell inner membrane. The enzyme catalyses sn-glycerol 3-phosphate(out) + ATP + H2O = sn-glycerol 3-phosphate(in) + ADP + phosphate + H(+). Its function is as follows. Part of the ABC transporter complex UgpBAEC involved in sn-glycerol-3-phosphate (G3P) import. Responsible for energy coupling to the transport system. The protein is sn-glycerol-3-phosphate import ATP-binding protein UgpC of Burkholderia ambifaria (strain ATCC BAA-244 / DSM 16087 / CCUG 44356 / LMG 19182 / AMMD) (Burkholderia cepacia (strain AMMD)).